The primary structure comprises 498 residues: ATP synthase subunit beta, chloroplastic (498 aa).

172–179 provides a ligand contact to ATP; that stretch reads GGAGVGKT.

Belongs to the ATPase alpha/beta chains family. F-type ATPases have 2 components, CF(1) - the catalytic core - and CF(0) - the membrane proton channel. CF(1) has five subunits: alpha(3), beta(3), gamma(1), delta(1), epsilon(1). CF(0) has four main subunits: a(1), b(1), b'(1) and c(9-12).

The protein localises to the plastid. The protein resides in the chloroplast thylakoid membrane. It carries out the reaction ATP + H2O + 4 H(+)(in) = ADP + phosphate + 5 H(+)(out). In terms of biological role, produces ATP from ADP in the presence of a proton gradient across the membrane. The catalytic sites are hosted primarily by the beta subunits. This chain is ATP synthase subunit beta, chloroplastic, found in Phaseolus vulgaris (Kidney bean).